The sequence spans 318 residues: uncharacterized protein (318 aa).

Belongs to the glycosyltransferase 2 family.

This is an uncharacterized protein from Rickettsia typhi (strain ATCC VR-144 / Wilmington).